Reading from the N-terminus, the 27-residue chain is Metalloproteinase inhibitor 1 (27 aa).

The segment covering 1 to 12 has biased composition (acidic residues); that stretch reads IEPERQEEEEEE. A disordered region spans residues 1 to 27; it reads IEPERQEEEEEETRQRVRRGQVRQQQQ.

Functionally, metalloproteinase inhibitor, active on a globulinase from L.albus seeds, thermolysin and gelatinase B. The chain is Metalloproteinase inhibitor 1 from Lupinus albus (White lupine).